A 132-amino-acid polypeptide reads, in one-letter code: MAAGMKGKRSRRRKERKNVEHGCAHIKSTFNNSIVTITDSVGNTLSWASAGGLGFRGSRKSTPFAAQMAAETAAKVAMEHGLKSIEVYVKGPGSGREAAIRSLQAAGLEVTLIKDVTPIPHNGCRPPKRRRV.

Over residues 1–16 (MAAGMKGKRSRRRKER) the composition is skewed to basic residues. A disordered region spans residues 1 to 20 (MAAGMKGKRSRRRKERKNVE).

Belongs to the universal ribosomal protein uS11 family. In terms of assembly, part of the 30S ribosomal subunit. Interacts with proteins S7 and S18. Binds to IF-3.

Functionally, located on the platform of the 30S subunit, it bridges several disparate RNA helices of the 16S rRNA. Forms part of the Shine-Dalgarno cleft in the 70S ribosome. The protein is Small ribosomal subunit protein uS11 of Clostridium botulinum (strain Kyoto / Type A2).